The chain runs to 168 residues: Cyanate hydratase (168 aa).

Residues Arg94, Glu97, and Ser120 contribute to the active site.

The protein belongs to the cyanase family.

It carries out the reaction cyanate + hydrogencarbonate + 3 H(+) = NH4(+) + 2 CO2. Its function is as follows. Catalyzes the reaction of cyanate with bicarbonate to produce ammonia and carbon dioxide. This chain is Cyanate hydratase, found in Oryza sativa subsp. indica (Rice).